A 459-amino-acid chain; its full sequence is uncharacterized protein (459 aa).

Positions 7–65 (PVNKNEIYTLTFEDLTHEGNGVAKIEGYPLFVPEVLPDEQAKVKVVKVNKNFGFGKLLE) constitute a TRAM domain. [4Fe-4S] cluster-binding residues include Cys-78, Cys-82, Cys-85, and Cys-164. S-adenosyl-L-methionine-binding residues include Gln-288, Tyr-317, Glu-338, and Asp-386. Cys-413 acts as the Nucleophile in catalysis.

Belongs to the class I-like SAM-binding methyltransferase superfamily. RNA M5U methyltransferase family.

This is an uncharacterized protein from Oceanobacillus iheyensis (strain DSM 14371 / CIP 107618 / JCM 11309 / KCTC 3954 / HTE831).